Reading from the N-terminus, the 137-residue chain is Large ribosomal subunit protein uL13 (137 aa).

It belongs to the universal ribosomal protein uL13 family. In terms of assembly, part of the 50S ribosomal subunit.

Functionally, this protein is one of the early assembly proteins of the 50S ribosomal subunit, although it is not seen to bind rRNA by itself. It is important during the early stages of 50S assembly. The chain is Large ribosomal subunit protein uL13 from Methanococcus maripaludis (strain DSM 14266 / JCM 13030 / NBRC 101832 / S2 / LL).